The following is a 164-amino-acid chain: uncharacterized protein (164 aa).

The BFN domain maps to 1-129 (MGEVRVVGIR…AVLAQAGLLI (129 aa)).

This is an uncharacterized protein from Mycobacterium tuberculosis (strain CDC 1551 / Oshkosh).